We begin with the raw amino-acid sequence, 27 residues long: Conotoxin flf14b (27 aa).

Cystine bridges form between C6-C26 and C10-C22.

Expressed by the venom duct.

Its subcellular location is the secreted. This Conus anabathrum floridanus (Florida cone) protein is Conotoxin flf14b.